The sequence spans 201 residues: Kinetochore protein SPC24 homolog (201 aa).

Residues 78 to 133 are a coiled coil; that stretch reads DIAAEDEIERLQKELDEEMEREFKLKDELRLVADELKDLNAQLSSIDEHKQSTKRK.

Belongs to the SPC24 family. In terms of assembly, component of the NDC80 complex, which consists of NDC80, NUF2, SPC24 and SPC25. Highly expressed in actively dividing tissues, such as shoot apical meristem (SAM), root apical meristem (RAM), vasculature, newly emerging leaves and inflorescence shoots.

Its subcellular location is the chromosome. The protein localises to the centromere. Its function is as follows. Acts as a component of the essential kinetochore-associated NDC80 complex, which is required for chromosome segregation and spindle checkpoint activity to ensure proper cell division. Required for the maintenance of plant architecture. The sequence is that of Kinetochore protein SPC24 homolog from Arabidopsis thaliana (Mouse-ear cress).